An 83-amino-acid chain; its full sequence is Apolipoprotein C-I, acidic form (83 aa).

A signal peptide spans 1 to 26 (MRLFLSLPVLVVVLSMVLEGPAPAQG).

This sequence belongs to the apolipoprotein C1 family.

It localises to the secreted. Its function is as follows. Inhibitor of lipoprotein binding to the low density lipoprotein (LDL) receptor, LDL receptor-related protein, and very low density lipoprotein (VLDL) receptor. Associates with high density lipoproteins (HDL) and the triacylglycerol-rich lipoproteins in the plasma and makes up about 10% of the protein of the VLDL and 2% of that of HDL. Appears to interfere directly with fatty acid uptake and is also the major plasma inhibitor of cholesteryl ester transfer protein (CETP). Binds free fatty acids and reduces their intracellular esterification. Modulates the interaction of APOE with beta-migrating VLDL and inhibits binding of beta-VLDL to the LDL receptor-related protein. The chain is Apolipoprotein C-I, acidic form (APOC1A) from Pongo abelii (Sumatran orangutan).